The primary structure comprises 336 residues: F420-dependent glucose-6-phosphate dehydrogenase (336 aa).

Coenzyme F420-(gamma-Glu)n is bound at residue D39. H40 functions as the Proton donor in the catalytic mechanism. Coenzyme F420-(gamma-Glu)n-binding positions include T76 and 107 to 108; that span reads TG. The active-site Proton acceptor is E109. Residues N112, 177–178, and 180–181 each bind coenzyme F420-(gamma-Glu)n; these read GG and EV. Residues T195, K198, K259, and R283 each coordinate substrate.

This sequence belongs to the F420-dependent glucose-6-phosphate dehydrogenase family. As to quaternary structure, homodimer.

The catalysed reaction is oxidized coenzyme F420-(gamma-L-Glu)(n) + D-glucose 6-phosphate + H(+) = 6-phospho-D-glucono-1,5-lactone + reduced coenzyme F420-(gamma-L-Glu)(n). Catalyzes the coenzyme F420-dependent oxidation of glucose 6-phosphate (G6P) to 6-phosphogluconolactone. Appears to have a role in resistance to oxidative stress, via its consumption of G6P that serves as a source of reducing power to combat oxidative stress in mycobacteria. The protein is F420-dependent glucose-6-phosphate dehydrogenase of Mycobacterium leprae (strain Br4923).